Consider the following 371-residue polypeptide: Queuine tRNA-ribosyltransferase (371 aa).

Asp-92 acts as the Proton acceptor in catalysis. Residues 92-96, Asp-147, Gln-190, and Gly-217 each bind substrate; that span reads DSGGF. An RNA binding region spans residues 248–254; that stretch reads GVGKPID. Asp-267 (nucleophile) is an active-site residue. Residues 272-276 are RNA binding; important for wobble base 34 recognition; sequence TRSGR.

Belongs to the queuine tRNA-ribosyltransferase family. As to quaternary structure, homodimer. Within each dimer, one monomer is responsible for RNA recognition and catalysis, while the other monomer binds to the replacement base PreQ1.

The enzyme catalyses 7-aminomethyl-7-carbaguanine + guanosine(34) in tRNA = 7-aminomethyl-7-carbaguanosine(34) in tRNA + guanine. The protein operates within tRNA modification; tRNA-queuosine biosynthesis. Functionally, catalyzes the base-exchange of a guanine (G) residue with the queuine precursor 7-aminomethyl-7-deazaguanine (PreQ1) at position 34 (anticodon wobble position) in tRNAs with GU(N) anticodons (tRNA-Asp, -Asn, -His and -Tyr). Catalysis occurs through a double-displacement mechanism. The nucleophile active site attacks the C1' of nucleotide 34 to detach the guanine base from the RNA, forming a covalent enzyme-RNA intermediate. The proton acceptor active site deprotonates the incoming PreQ1, allowing a nucleophilic attack on the C1' of the ribose to form the product. After dissociation, two additional enzymatic reactions on the tRNA convert PreQ1 to queuine (Q), resulting in the hypermodified nucleoside queuosine (7-(((4,5-cis-dihydroxy-2-cyclopenten-1-yl)amino)methyl)-7-deazaguanosine). The protein is Queuine tRNA-ribosyltransferase of Caulobacter vibrioides (strain ATCC 19089 / CIP 103742 / CB 15) (Caulobacter crescentus).